Reading from the N-terminus, the 540-residue chain is Chaperonin GroEL (540 aa).

ATP is bound by residues 29 to 32 (TLGP), 86 to 90 (DGTTT), Gly-413, 476 to 478 (NAA), and Asp-492.

The protein belongs to the chaperonin (HSP60) family. Forms a cylinder of 14 subunits composed of two heptameric rings stacked back-to-back. Interacts with the co-chaperonin GroES.

It is found in the cytoplasm. The enzyme catalyses ATP + H2O + a folded polypeptide = ADP + phosphate + an unfolded polypeptide.. Its function is as follows. Together with its co-chaperonin GroES, plays an essential role in assisting protein folding. The GroEL-GroES system forms a nano-cage that allows encapsulation of the non-native substrate proteins and provides a physical environment optimized to promote and accelerate protein folding. In Tsukamurella paurometabola (Corynebacterium paurometabolum), this protein is Chaperonin GroEL.